An 876-amino-acid polypeptide reads, in one-letter code: MASFPEADFQVCPLCKEMCGSPAPLSSNSSTSSSSSQTSGSSGGGGSSCGGAARRLHVLPCLHAFCRQCLEAQRHPAAGDALKLRCPICDQKVVISEPSGMDALPSSNFLLSNLLDVVVVAAAADEQKNGRAAGSGPAAGSGAGGGGANNRHHGRPPPHRAAAAASSPAAGSAAPSASSSSSSGGGGPAALLLRRPHSRQGEPRCSSCDEGNAASSRCLDCQEHLCDNCVRAHQRVRLTKDHFIERFAAGPAAASAGPAAPLALSPPYPASPYNILSVFPERASYCQHHDDEVLHFYCDTCSVPICRECTMGRHVGHSFIYLQDALQDSRTLTIQLLADAQQGRQAIQLSIEQAQAVAEQVEMKAKVVQSEVKAVTTRHKKALEERECELLWKVEKIRQVKAKSLYLQVEKLRQNLNKLDNTISAVQQVLEEGRTIDILLARDRMLAQVQELKNVRGLLQPQEDDRIMFTPPDQALYMAIKSMGFVSSGAFAPLTKATGEGLKRALQGKVASFTVIGYDHDGEPRLSGGDMISAVVMGPDGNLFGADVSDQQNGTYLVSYRPQLEGEHLVSVMMCNQHIENSPFKVVVKSGRSYIGIGLPGLSFGSEGDSDGKLCRPWGVSVDKEGYIIVADRSNNRIQVFKPCGTFHHKFGTLGSRPGQFDRPAGVACDVSRRIVVADKDNHRIQIFTFEGQFILKFGEKGTKNGQFNYPWDVAVNAEGKILVSDTRNHRVQLFGPDGVFLNKYGFEGALWKHFDSPRGVTFNHEGHLVVTDFNNHRLLVIHADCQSARFLGSEGSGNGQFLRPQGVAVDQEGRIIVADSRNHRVQIFESNGSFLCKFGAQGSGFGQMDRPSGIAVTPDGMIVVVDFGNNRILVF.

Residues 12–90 (CPLCKEMCGS…ALKLRCPICD (79 aa)) form an RING-type zinc finger. Residues 26-40 (SSNSSTSSSSSQTSG) show a composition bias toward low complexity. Disordered stretches follow at residues 26 to 46 (SSNSSTSSSSSQTSGSSGGGG) and 128 to 192 (KNGR…AALL). A compositionally biased stretch (gly residues) spans 137–148 (PAAGSGAGGGGA). The segment covering 160-182 (RAAAAASSPAAGSAAPSASSSSS) has biased composition (low complexity). The B box-type 1; atypical zinc-finger motif lies at 200–247 (QGEPRCSSCDEGNAASSRCLDCQEHLCDNCVRAHQRVRLTKDHFIERF). Cysteine 205, cysteine 208, cysteine 229, histidine 233, cysteine 286, histidine 289, cysteine 309, and histidine 314 together coordinate Zn(2+). The B box-type 2 zinc finger occupies 281-322 (ERASYCQHHDDEVLHFYCDTCSVPICRECTMGRHVGHSFIYL). Coiled coils occupy residues 344–373 (RQAIQLSIEQAQAVAEQVEMKAKVVQSEVK) and 399–434 (QVKAKSLYLQVEKLRQNLNKLDNTISAVQQVLEEGR). The stretch at 487–588 (SSGAFAPLTK…IENSPFKVVV (102 aa)) is one Filamin repeat. NHL repeat units follow at residues 601 to 644 (GLSF…FKPC), 648 to 691 (HHKF…FTFE), 695 to 738 (ILKF…FGPD), 742 to 785 (LNKY…IHAD), 789 to 832 (ARFL…FESN), and 836 to 876 (LCKF…ILVF).

This sequence belongs to the TRIM/RBCC family.

The protein resides in the cytoplasm. The protein localises to the P-body. It carries out the reaction S-ubiquitinyl-[E2 ubiquitin-conjugating enzyme]-L-cysteine + [acceptor protein]-L-lysine = [E2 ubiquitin-conjugating enzyme]-L-cysteine + N(6)-ubiquitinyl-[acceptor protein]-L-lysine.. It participates in protein modification; protein ubiquitination. Functionally, E3 ubiquitin-protein ligase that cooperates with the microRNAs (miRNAs) machinery and promotes embryonic stem cells proliferation and maintenance. Binds to miRNAs and participates in post-transcriptional repression of transcripts. Required to maintain proliferation and prevent premature differentiation of neural progenitor cells during early neural development. The protein is E3 ubiquitin-protein ligase TRIM71 (TRIM71) of Gallus gallus (Chicken).